The following is a 200-amino-acid chain: Phospholipase A2 inhibitor gamma subunit B (200 aa).

Residues 1-19 form the signal peptide; the sequence is MKFLLFCCLFGTFLATGMC. 8 cysteine pairs are disulfide-bonded: C22–C46, C25–C32, C39–C67, C73–C94, C95–C100, C120–C145, C138–C165, and C171–C191. N31 carries N-linked (GlcNAc...) asparagine glycosylation.

The protein belongs to the CNF-like-inhibitor family. Heterodimer of subunit A and subunit B. In terms of processing, N-glycosylated. Expressed by the liver. Not expressed in esophagus, stomach, pancreas, spleen, gall bladder, small intestine, rectum, kidney, trachea, lung, testis and body fat.

It is found in the secreted. Functionally, inhibits the enzymatic activity of phospholipase A2 (PA2). The chain is Phospholipase A2 inhibitor gamma subunit B from Elaphe quadrivirgata (Japanese four-lined ratsnake).